A 245-amino-acid polypeptide reads, in one-letter code: MNVLQKQSIAEMKRVLRNKYFVLWSLIMPIAFYYFFTNVVNTNVPDQRAWEAHYLMSMTVFSVMGSSIMTLGIRMVQERSQGWAAFIRLTPLPDHIYLSAQMIGQSVIHVLSITVIFLFGAIINDIALSPFEWMMSGLWILFGALPFLALGTLIGLMRKVETAAGISNVLYMLLALGGGMWMPFEVMPDMMQSIGQWLPSYHFGSGAWELVRGGSPTWKNILILIAYMMLFMLLSKYIRRKQEAV.

The next 6 helical transmembrane spans lie at 20 to 40, 53 to 73, 103 to 123, 137 to 157, 164 to 184, and 214 to 234; these read YFVL…TNVV, HYLM…TLGI, IGQS…GAII, GLWI…IGLM, AGIS…WMPF, and GSPT…FMLL. The region spanning 20–242 is the ABC transmembrane type-2 domain; that stretch reads YFVLWSLIMP…LLSKYIRRKQ (223 aa).

Belongs to the ABC-2 integral membrane protein family.

Its subcellular location is the cell membrane. The chain is Putative transport permease YvfS (yvfS) from Bacillus subtilis (strain 168).